Consider the following 101-residue polypeptide: DET1- and DDB1-associated protein 1 (101 aa).

The tract at residues Asn67 to Thr101 is disordered.

Belongs to the DDA1 family. In terms of assembly, component of numerous DCX (DDB1-CUL4-X-box) E3 ubiquitin-protein ligase complexes which consist of a core of DDB1, cullin-4 (CUL4A or CUL4B), DDA1 and RBX1.

The protein operates within protein modification; protein ubiquitination. Its function is as follows. Functions as a component of numerous distinct DCX (DDB1-CUL4-X-box) E3 ubiquitin-protein ligase complexes which mediate the ubiquitination and subsequent proteasomal degradation of target proteins. In the DCX complexes, acts as a scaffolding subunit required to stabilize the complex. This chain is DET1- and DDB1-associated protein 1, found in Xenopus tropicalis (Western clawed frog).